The following is a 412-amino-acid chain: Type II methyltransferase M.Sau3AI (412 aa).

Residues 4–402 (IKVVELFAGV…NQIEKIDSIT (399 aa)) enclose the SAM-dependent MTase C5-type domain. The active site involves Cys85.

Belongs to the class I-like SAM-binding methyltransferase superfamily. C5-methyltransferase family.

It carries out the reaction a 2'-deoxycytidine in DNA + S-adenosyl-L-methionine = a 5-methyl-2'-deoxycytidine in DNA + S-adenosyl-L-homocysteine + H(+). In terms of biological role, a methylase that recognizes the double-stranded sequence 5'-GATC-3', methylates C-4 on both strands and protects the DNA from cleavage by the Sau3AI endonuclease. The sequence is that of Type II methyltransferase M.Sau3AI (sau3AIM) from Staphylococcus aureus.